The chain runs to 478 residues: Transposase for insertion sequence element IS231E (478 aa).

It belongs to the transposase 11 family.

Its function is as follows. Involved in the transposition of the insertion sequence. The chain is Transposase for insertion sequence element IS231E from Bacillus thuringiensis subsp. finitimus.